The following is a 391-amino-acid chain: Phosphopentomutase (391 aa).

Mn(2+) contacts are provided by aspartate 12, aspartate 285, histidine 290, aspartate 326, histidine 327, and histidine 338.

This sequence belongs to the phosphopentomutase family. Mn(2+) serves as cofactor.

Its subcellular location is the cytoplasm. It carries out the reaction 2-deoxy-alpha-D-ribose 1-phosphate = 2-deoxy-D-ribose 5-phosphate. The catalysed reaction is alpha-D-ribose 1-phosphate = D-ribose 5-phosphate. Its pathway is carbohydrate degradation; 2-deoxy-D-ribose 1-phosphate degradation; D-glyceraldehyde 3-phosphate and acetaldehyde from 2-deoxy-alpha-D-ribose 1-phosphate: step 1/2. In terms of biological role, isomerase that catalyzes the conversion of deoxy-ribose 1-phosphate (dRib-1-P) and ribose 1-phosphate (Rib-1-P) to deoxy-ribose 5-phosphate (dRib-5-P) and ribose 5-phosphate (Rib-5-P), respectively. This Herpetosiphon aurantiacus (strain ATCC 23779 / DSM 785 / 114-95) protein is Phosphopentomutase.